A 238-amino-acid polypeptide reads, in one-letter code: Lipid transferase CIDEC (238 aa).

Residues 1 to 35 form a required for liquid-liquid phase separation (LLPS) region; that stretch reads MEYAMKSLSLLYPKSLSRHVSVRTSVVTQQLLSEP. A CIDE-N domain is found at 41–118; the sequence is RARPCRVSTA…VLQKGQKWQP (78 aa).

It belongs to the CIDE family. In terms of assembly, homodimer. Homooligomer; undergoes liquid-liquid phase separation (LLPS) via its N-terminus, facilitating lipid droplet fusion, occurs at the lipid droplet contact sites. Interacts with CIDEA. Interacts with PLIN1. Interacts with NFAT5; this interaction is direct and retains NFAT5 in the cytoplasm. Interacts with CEBPB. Interacts with isoform CLSTN3beta of CLSTN3; inhibiting the lipid transferase activity of CIDEC. In terms of processing, ubiquitinated and targeted to proteasomal degradation, resulting in a short half-life (about 15 minutes in 3T3-L1 cells). Protein stability depends on triaclyglycerol synthesis, fatty acid availability and lipid droplet formation. Expressed mainly in adipose tissue, small intestine, heart, colon and stomach and, at lower levels, in brain, kidney and liver.

The protein resides in the lipid droplet. It is found in the endoplasmic reticulum. It localises to the nucleus. It catalyses the reaction a triacyl-sn-glycerol(in) = a triacyl-sn-glycerol(out). Functionally, lipid transferase specifically expressed in white adipose tissue, which promotes unilocular lipid droplet formation by mediating lipid droplet fusion. Lipid droplet fusion promotes their enlargement, restricting lipolysis and favoring lipid storage. Localizes on the lipid droplet surface, at focal contact sites between lipid droplets, and mediates atypical lipid droplet fusion by undergoing liquid-liquid phase separation (LLPS) and promoting directional net neutral lipid transfer from the smaller to larger lipid droplets. The transfer direction may be driven by the internal pressure difference between the contacting lipid droplet pair. Its role in neutral lipid transfer and lipid droplet enlargement is activated by the interaction with PLIN1. May also act as a CEBPB coactivator in the white adipose tissue to control the expression of a subset of CEBPB downstream target genes, including SOCS1, SOCS3, TGFB1, TGFBR1, ID2 and XDH. When overexpressed in preadipocytes, induces apoptosis or increases cell susceptibility to apoptosis induced by serum deprivation or TGFB treatment. The sequence is that of Lipid transferase CIDEC from Homo sapiens (Human).